The primary structure comprises 369 residues: Anhydro-N-acetylmuramic acid kinase (369 aa).

Glycine 9–aspartate 16 provides a ligand contact to ATP.

This sequence belongs to the anhydro-N-acetylmuramic acid kinase family.

The enzyme catalyses 1,6-anhydro-N-acetyl-beta-muramate + ATP + H2O = N-acetyl-D-muramate 6-phosphate + ADP + H(+). It participates in amino-sugar metabolism; 1,6-anhydro-N-acetylmuramate degradation. The protein operates within cell wall biogenesis; peptidoglycan recycling. Its function is as follows. Catalyzes the specific phosphorylation of 1,6-anhydro-N-acetylmuramic acid (anhMurNAc) with the simultaneous cleavage of the 1,6-anhydro ring, generating MurNAc-6-P. Is required for the utilization of anhMurNAc either imported from the medium or derived from its own cell wall murein, and thus plays a role in cell wall recycling. The chain is Anhydro-N-acetylmuramic acid kinase from Phenylobacterium zucineum (strain HLK1).